The sequence spans 81 residues: uncharacterized protein (81 aa).

This is an uncharacterized protein from Sulfolobus islandicus filamentous virus (isolate Iceland/Hveragerdi) (SIFV).